The sequence spans 406 residues: ATP-dependent RNA helicase eIF4A (406 aa).

The Q motif motif lies at 25–53 (DSFDAMDLKPELLRGVYAYGFERPSAIQQ). In terms of domain architecture, Helicase ATP-binding spans 56–226 (ILPIIKGNDV…TKFMRDPVRI (171 aa)). Residue 69–76 (AQSGTGKT) coordinates ATP. The DEAD box signature appears at 174–177 (DEAD). The Helicase C-terminal domain occupies 237 to 398 (GIKQFYIAVE…EMPMNVAGKF (162 aa)).

The protein belongs to the DEAD box helicase family. eIF4A subfamily. In terms of assembly, component of the eIF4F complex, which composition varies with external and internal environmental conditions. It is composed of at least eIF4A, eIF4E and eIF4G.

The protein resides in the cytoplasm. It catalyses the reaction ATP + H2O = ADP + phosphate + H(+). In terms of biological role, ATP-dependent RNA helicase which is a subunit of the eIF4F complex involved in cap recognition and is required for mRNA binding to ribosome. In the current model of translation initiation, eIF4A unwinds RNA secondary structures in the 5'-UTR of mRNAs which is necessary to allow efficient binding of the small ribosomal subunit, and subsequent scanning for the initiator codon. The sequence is that of ATP-dependent RNA helicase eIF4A (tif1) from Aspergillus fumigatus (strain ATCC MYA-4609 / CBS 101355 / FGSC A1100 / Af293) (Neosartorya fumigata).